Here is a 132-residue protein sequence, read N- to C-terminus: Interleukin-13 (132 aa).

Residues 1–18 (MALLLTAVIVLICFGGLT) form the signal peptide. Residues Asn38, Asn49, Asn57, and Asn75 are each glycosylated (N-linked (GlcNAc...) asparagine). 2 disulfides stabilise this stretch: Cys48/Cys76 and Cys64/Cys90.

The protein belongs to the IL-4/IL-13 family. Interacts with IL13RA2.

Its subcellular location is the secreted. Its function is as follows. Cytokine that plays important roles in allergic inflammation and immune response to parasite infection. Synergizes with IL2 in regulating interferon-gamma synthesis. Stimulates B-cell proliferation, and activation of eosinophils, basophils, and mast cells. Plays an important role in controlling IL33 activity by modulating the production of transmembrane and soluble forms of interleukin-1 receptor-like 1/IL1RL1. Displays the capacity to antagonize Th1-driven proinflammatory immune response and downregulates synthesis of many proinflammatory cytokines including IL1, IL6, IL10, IL12 and TNF-alpha through a mechanism that partially involves suppression of NF-kappa-B. Also functions on nonhematopoietic cells, including endothelial cells where it induces vascular cell adhesion protein 1/VCAM1, which is important in the recruitment of eosinophils. Exerts its biological effects through its receptors which comprises the IL4R chain and the IL13RA1 chain, to activate JAK1 and TYK2, leading to the activation of STAT6. Aside from IL13RA1, another receptor IL13RA2 acts as a high affinity decoy for IL13 and mediates internalization and depletion of extracellular IL13. The protein is Interleukin-13 (IL13) of Bos taurus (Bovine).